The primary structure comprises 483 residues: Triplex capsid protein 1 (483 aa).

Positions 24–40 match the RIP homotypic interaction motif (RHIM) motif; sequence LLGNNRFIQIGNGLHMT.

The protein belongs to the herpesviridae TRX1 protein family. In terms of assembly, interacts with TRX2, MCP and capsid vertex component 2/CVC2. Self-assembles into homo-oligomeric amyloid fibrils. Interacts with host ZBP1; this interaction prevents host necroptosis and extrinsic apoptosis. Interacts with host RIPK3.

It is found in the virion. Its subcellular location is the host nucleus. Functionally, structural component of the T=16 icosahedral capsid. The capsid is composed of pentamers and hexamers of major capsid protein/MCP, which are linked together by heterotrimers called triplexes. These triplexes are formed by a single molecule of triplex protein 1/TRX1 and two copies of triplex protein 2/TRX2. Additionally, TRX1 is required for efficient transport of TRX2 to the nucleus, which is the site of capsid assembly. Also prevents necroptosis and extrinsic apoptosis by sequestering host ZBP1 into large, insoluble supercomplexes and impairing its ability to interact with RIPK3. This chain is Triplex capsid protein 1, found in Varicella-zoster virus (strain Dumas) (HHV-3).